A 326-amino-acid polypeptide reads, in one-letter code: Pyruvate dehydrogenase E1 component subunit alpha (326 aa).

In terms of assembly, heterodimer of an alpha and a beta chain. Requires thiamine diphosphate as cofactor.

It carries out the reaction N(6)-[(R)-lipoyl]-L-lysyl-[protein] + pyruvate + H(+) = N(6)-[(R)-S(8)-acetyldihydrolipoyl]-L-lysyl-[protein] + CO2. Its function is as follows. The pyruvate dehydrogenase complex catalyzes the overall conversion of pyruvate to acetyl-CoA and CO(2). It contains multiple copies of three enzymatic components: pyruvate dehydrogenase (E1), dihydrolipoamide acetyltransferase (E2) and lipoamide dehydrogenase (E3). The chain is Pyruvate dehydrogenase E1 component subunit alpha (pdhA) from Rickettsia conorii (strain ATCC VR-613 / Malish 7).